Here is a 73-residue protein sequence, read N- to C-terminus: MKAGIHPEYKAVNATCSCGNSFVFNSTLDKDSIHLDVCDKCHPFYTGKQRIVDTGGRVDRFNKRFGALSSGKK.

Zn(2+) is bound by residues C16, C18, C38, and C41.

This sequence belongs to the bacterial ribosomal protein bL31 family. Type A subfamily. As to quaternary structure, part of the 50S ribosomal subunit. Zn(2+) serves as cofactor.

Its function is as follows. Binds the 23S rRNA. The sequence is that of Large ribosomal subunit protein bL31 from Vibrio vulnificus (strain YJ016).